We begin with the raw amino-acid sequence, 478 residues long: Lipoprotein lipase (478 aa).

The first 27 residues, 1–27, serve as a signal peptide directing secretion; sequence MESKVLLLLALSVWLQSLTVSRGGLVA. The tract at residues 35–56 is interaction with GPIHBP1; that stretch reads KDFRDIESKFALRTPEDTAEDT. Cysteines 57 and 70 form a disulfide. Asn73 carries an N-linked (GlcNAc...) asparagine glycan. Tyr124 carries the 3'-nitrotyrosine modification. Residue Ser162 is the Nucleophile of the active site. Asp186 functions as the Charge relay system in the catalytic mechanism. Tyr194 is subject to 3'-nitrotyrosine. Ca(2+) contacts are provided by Ala197, Arg200, Ser202, and Asp205. The cysteines at positions 246 and 269 are disulfide-linked. The tract at residues 246–269 is essential for determining substrate specificity; it reads CNIGEALRVIAERGLGDVDQLVKC. His271 serves as the catalytic Charge relay system. Cystine bridges form between Cys294/Cys313 and Cys305/Cys308. The 124-residue stretch at 344 to 467 folds into the PLAT domain; sequence FHYQVKIHFS…KGKSPVIFVK (124 aa). At Tyr346 the chain carries 3'-nitrotyrosine. Asn389 is a glycosylation site (N-linked (GlcNAc...) asparagine). The segment at 420–424 is important for interaction with lipoprotein particles; that stretch reads WSNWW. The important for heparin binding stretch occupies residues 433–437; it reads KIRVK. Positions 446-470 are interaction with GPIHBP1; it reads IFCSREKMSYLQKGKSPVIFVKCHD. A disulfide bond links Cys448 and Cys468.

Belongs to the AB hydrolase superfamily. Lipase family. Homodimer. Interacts with GPIHBP1 with 1:1 stoichiometry. Interacts with APOC2; the interaction activates LPL activity in the presence of lipids. Interaction with heparan sulfate proteoglycans is required to protect LPL against loss of activity. Associates with lipoprotein particles in blood plasma. Interacts with LMF1 and SEL1L; interaction with SEL1L is required to prevent aggregation of newly synthesized LPL in the endoplasmic reticulum (ER), and for normal export of LPL from the ER to the extracellular space. Interacts with SORL1; SORL1 acts as a sorting receptor, promoting LPL localization to endosomes and later to lysosomes, leading to degradation of newly synthesized LPL. Tyrosine nitration after lipopolysaccharide (LPS) challenge down-regulates the lipase activity.

Its subcellular location is the cell membrane. The protein resides in the secreted. It localises to the extracellular space. The protein localises to the extracellular matrix. It carries out the reaction a triacylglycerol + H2O = a diacylglycerol + a fatty acid + H(+). It catalyses the reaction a 1,2-diacyl-sn-glycero-3-phosphocholine + H2O = a 2-acyl-sn-glycero-3-phosphocholine + a fatty acid + H(+). The catalysed reaction is 1,2,3-tri-(9Z-octadecenoyl)-glycerol + H2O = di-(9Z)-octadecenoylglycerol + (9Z)-octadecenoate + H(+). The enzyme catalyses 1,2-di-(9Z-octadecenoyl)-sn-glycero-3-phosphocholine + H2O = (9Z-octadecenoyl)-sn-glycero-3-phosphocholine + (9Z)-octadecenoate + H(+). It carries out the reaction 1,2,3-tributanoylglycerol + H2O = dibutanoylglycerol + butanoate + H(+). It catalyses the reaction 1,2-dihexadecanoyl-sn-glycero-3-phosphocholine + H2O = hexadecanoyl-sn-glycero-3-phosphocholine + hexadecanoate + H(+). Its activity is regulated as follows. The apolipoprotein APOC2 acts as a coactivator of LPL activity. Ca(2+) binding promotes protein stability and formation of the active homodimer. Interaction with GPIHBP1 protects LPL against inactivation by ANGPTL4. In terms of biological role, key enzyme in triglyceride metabolism. Catalyzes the hydrolysis of triglycerides from circulating chylomicrons and very low density lipoproteins (VLDL), and thereby plays an important role in lipid clearance from the blood stream, lipid utilization and storage. Although it has both phospholipase and triglyceride lipase activities it is primarily a triglyceride lipase with low but detectable phospholipase activity. Mediates margination of triglyceride-rich lipoprotein particles in capillaries. Recruited to its site of action on the luminal surface of vascular endothelium by binding to GPIHBP1 and cell surface heparan sulfate proteoglycans. The polypeptide is Lipoprotein lipase (LPL) (Ovis aries (Sheep)).